The following is a 377-amino-acid chain: Nitric oxide reductase FlRd-NAD(+) reductase (377 aa).

The protein belongs to the FAD-dependent oxidoreductase family. Requires FAD as cofactor.

The protein resides in the cytoplasm. It carries out the reaction 2 reduced [nitric oxide reductase rubredoxin domain] + NAD(+) + H(+) = 2 oxidized [nitric oxide reductase rubredoxin domain] + NADH. Its pathway is nitrogen metabolism; nitric oxide reduction. In terms of biological role, one of at least two accessory proteins for anaerobic nitric oxide (NO) reductase. Reduces the rubredoxin moiety of NO reductase. This is Nitric oxide reductase FlRd-NAD(+) reductase from Salmonella enteritidis PT4 (strain P125109).